The chain runs to 404 residues: Probable tRNA sulfurtransferase (404 aa).

Positions 60–165 constitute a THUMP domain; it reads QPIVEALKLV…DEAAYISYEE (106 aa). ATP-binding positions include 183–184, 208–209, Arg265, Gly287, and Gln296; these read ML and HF.

It belongs to the ThiI family.

It localises to the cytoplasm. It carries out the reaction [ThiI sulfur-carrier protein]-S-sulfanyl-L-cysteine + a uridine in tRNA + 2 reduced [2Fe-2S]-[ferredoxin] + ATP + H(+) = [ThiI sulfur-carrier protein]-L-cysteine + a 4-thiouridine in tRNA + 2 oxidized [2Fe-2S]-[ferredoxin] + AMP + diphosphate. The enzyme catalyses [ThiS sulfur-carrier protein]-C-terminal Gly-Gly-AMP + S-sulfanyl-L-cysteinyl-[cysteine desulfurase] + AH2 = [ThiS sulfur-carrier protein]-C-terminal-Gly-aminoethanethioate + L-cysteinyl-[cysteine desulfurase] + A + AMP + 2 H(+). The protein operates within cofactor biosynthesis; thiamine diphosphate biosynthesis. In terms of biological role, catalyzes the ATP-dependent transfer of a sulfur to tRNA to produce 4-thiouridine in position 8 of tRNAs, which functions as a near-UV photosensor. Also catalyzes the transfer of sulfur to the sulfur carrier protein ThiS, forming ThiS-thiocarboxylate. This is a step in the synthesis of thiazole, in the thiamine biosynthesis pathway. The sulfur is donated as persulfide by IscS. This Streptococcus pyogenes serotype M49 (strain NZ131) protein is Probable tRNA sulfurtransferase.